The sequence spans 357 residues: D-alanine--D-alanine ligase (357 aa).

The region spanning 134-339 is the ATP-grasp domain; it reads KQLFEHRGLP…YPDLIAKLID (206 aa). An ATP-binding site is contributed by 167 to 222; the sequence is NDKLTYPVFVKPANLGSSVGISKCNNEEELKSGITEAFQFDRKLVIEQGINAREIE. Mg(2+) contacts are provided by Asp293, Glu306, and Asn308.

It belongs to the D-alanine--D-alanine ligase family. Mg(2+) serves as cofactor. Requires Mn(2+) as cofactor.

The protein localises to the cytoplasm. It carries out the reaction 2 D-alanine + ATP = D-alanyl-D-alanine + ADP + phosphate + H(+). It participates in cell wall biogenesis; peptidoglycan biosynthesis. Functionally, cell wall formation. The sequence is that of D-alanine--D-alanine ligase from Staphylococcus epidermidis (strain ATCC 12228 / FDA PCI 1200).